The chain runs to 241 residues: Orotidine 5'-phosphate decarboxylase (241 aa).

Substrate-binding positions include D15, K36, 63 to 72 (DLKFHDIPNT), T127, R189, Q198, G218, and R219. K65 acts as the Proton donor in catalysis.

This sequence belongs to the OMP decarboxylase family. Type 1 subfamily. Homodimer.

It carries out the reaction orotidine 5'-phosphate + H(+) = UMP + CO2. The protein operates within pyrimidine metabolism; UMP biosynthesis via de novo pathway; UMP from orotate: step 2/2. Catalyzes the decarboxylation of orotidine 5'-monophosphate (OMP) to uridine 5'-monophosphate (UMP). This chain is Orotidine 5'-phosphate decarboxylase, found in Prochlorococcus marinus (strain MIT 9211).